A 494-amino-acid polypeptide reads, in one-letter code: UDP-N-acetylmuramoyl-L-alanyl-D-glutamate--2,6-diaminopimelate ligase (494 aa).

S30 contacts UDP-N-acetyl-alpha-D-muramoyl-L-alanyl-D-glutamate. 110–116 (GTNGKTS) is a binding site for ATP. Residues 152–153 (TT), S179, and R187 contribute to the UDP-N-acetyl-alpha-D-muramoyl-L-alanyl-D-glutamate site. N6-carboxylysine is present on K219. Meso-2,6-diaminopimelate-binding positions include R380, 404-407 (DNPR), G456, and E460. Positions 404–407 (DNPR) match the Meso-diaminopimelate recognition motif motif.

Belongs to the MurCDEF family. MurE subfamily. The cofactor is Mg(2+). In terms of processing, carboxylation is probably crucial for Mg(2+) binding and, consequently, for the gamma-phosphate positioning of ATP.

The protein resides in the cytoplasm. The enzyme catalyses UDP-N-acetyl-alpha-D-muramoyl-L-alanyl-D-glutamate + meso-2,6-diaminopimelate + ATP = UDP-N-acetyl-alpha-D-muramoyl-L-alanyl-gamma-D-glutamyl-meso-2,6-diaminopimelate + ADP + phosphate + H(+). The protein operates within cell wall biogenesis; peptidoglycan biosynthesis. Functionally, catalyzes the addition of meso-diaminopimelic acid to the nucleotide precursor UDP-N-acetylmuramoyl-L-alanyl-D-glutamate (UMAG) in the biosynthesis of bacterial cell-wall peptidoglycan. The polypeptide is UDP-N-acetylmuramoyl-L-alanyl-D-glutamate--2,6-diaminopimelate ligase (Alkaliphilus metalliredigens (strain QYMF)).